The chain runs to 1549 residues: Trichohyalin (1549 aa).

The interval 1 to 91 (MSPLLRSIFN…AAACYYALGQ (91 aa)) is S-100-like. 2 consecutive EF-hand domains span residues 23 to 48 (CDGT…LRKP) and 49 to 84 (HDPE…VAAA). Positions 27, 32, 62, 64, 66, and 73 each coordinate Ca(2+). 4 disordered regions span residues 97 to 125 (EKEA…PQDR), 157 to 180 (LQRR…GREL), 262 to 359 (LRRK…KQEQ), and 404 to 448 (QREK…RQER). Composition is skewed to basic and acidic residues over residues 171-180 (LQQRPKGREL), 262-278 (LRRK…RQEQ), and 317-335 (HRQE…ERQQ). A compositionally biased stretch (low complexity) spans 336–348 (EQQISEEVQSLQE). Residues 349-359 (DQGRQRLKQEQ) are compositionally biased toward basic and acidic residues. 14 repeat units span residues 413–448 (ERQY…RQER), 449–476 (EKQY…RQER), 477–504 (EKQY…RQER), 505–532 (ERQY…RQER), 533–560 (ERQY…RQER), 561–588 (EKQY…RQER), 589–616 (EKQY…RQER), 617–644 (ERQY…RQER), 645–678 (ERQY…RQER), 679–706 (ERQY…RQER), 707–742 (ERQY…RQVR), 743–771 (ERKY…DREK), 772–796 (RQYL…RQER), and 797–832 (ERQY…RQEL). The tract at residues 413-832 (ERQYREVELQ…ECEKRRRQEL (420 aa)) is 14 X 28 AA approximate tandem repeats. Disordered regions lie at residues 782–803 (REEE…YREE), 839–942 (EELQ…RKFR), and 980–1000 (QLRQ…ERDR). 3 stretches are compositionally biased toward basic and acidic residues: residues 850–884 (FRDD…DSWV), 895–918 (PLQD…KRDS), and 925–942 (LLER…RKFR). 23 repeat units span residues 938-961 (DRKF…YLEE), 962-985 (DRKF…RQER), 986-1021 (DRKF…RQER), 1022-1044 (DRKF…RQER), 1045-1067 (DRKF…RQER), 1068-1090 (DRKF…LRQE), 1091-1121 (RNRK…RQKR), 1122-1144 (DRKF…RQER), 1145-1167 (DRKF…RQER), 1168-1197 (DRKF…RQER), 1198-1227 (DRKF…RQER), 1228-1250 (DRKF…RQER), 1251-1273 (DRKF…RQER), 1274-1296 (DRKF…RQER), 1297-1319 (DRKF…RQER), 1320-1342 (DRKF…RQER), 1343-1368 (DRKF…ELEG), 1369-1391 (VFSQ…QRQR), 1392-1416 (DRKF…VQEQ), 1417-1439 (DRKF…RRRQ), 1440-1461 (QLDQ…RRQE), 1462-1484 (QELR…EEEQ), and 1485-1507 (LRRQ…SRRQ). A 23 X 23 AA approximate tandem repeats region spans residues 938–1507 (DRKFREEEQL…ERDVQQSRRQ (570 aa)). The segment covering 1489 to 1523 (QQEEQKRRQERDVQQSRRQVWEEDKGRRQVLEAGK) has biased composition (basic and acidic residues). The disordered stretch occupies residues 1489–1549 (QQEEQKRRQE…IQEQRSQYRP (61 aa)).

Belongs to the S100-fused protein family. As to quaternary structure, homodimer. Substrate of transglutaminase. Some 200 arginines are probably converted to citrullines by peptidylarginine deimidase. In terms of tissue distribution, found in the hard keratinizing tissues such as the inner root sheath (IRS) of hair follicles and medulla, and in the epithelia of the tongue, hoof and rumen.

Functionally, intermediate filament-associated protein that associates in regular arrays with keratin intermediate filaments (KIF) of the inner root sheath cells of the hair follicle and the granular layer of the epidermis. It later becomes cross-linked to KIF by isodipeptide bonds. It may serve as scaffold protein, together with involucrin, in the organization of the cell envelope or even anchor the cell envelope to the KIF network. It may be involved in its own calcium-dependent postsynthetic processing during terminal differentiation. This Ovis aries (Sheep) protein is Trichohyalin (TCHH).